The primary structure comprises 354 residues: Protein RecA (354 aa).

67-74 (GPESSGKT) is an ATP binding site.

The protein belongs to the RecA family.

It is found in the cytoplasm. Functionally, can catalyze the hydrolysis of ATP in the presence of single-stranded DNA, the ATP-dependent uptake of single-stranded DNA by duplex DNA, and the ATP-dependent hybridization of homologous single-stranded DNAs. It interacts with LexA causing its activation and leading to its autocatalytic cleavage. In Haemophilus influenzae (strain 86-028NP), this protein is Protein RecA.